Reading from the N-terminus, the 173-residue chain is Insertion element IS1397 uncharacterized 20.1 kDa protein (173 aa).

The tract at residues 115-135 (KSMTRSDDTHENEANMTPEEM) is disordered.

This sequence belongs to the IS150/IS1296 orfA family.

The chain is Insertion element IS1397 uncharacterized 20.1 kDa protein from Escherichia coli.